Reading from the N-terminus, the 112-residue chain is Replication initiation control protein YabA (112 aa).

Zn(2+)-binding residues include histidine 85, cysteine 87, cysteine 101, and cysteine 104.

It belongs to the YabA family. In terms of assembly, homotetramer. Interacts with both DnaA and DnaN, acting as a bridge between these two proteins. The cofactor is Zn(2+).

The protein resides in the cytoplasm. It localises to the nucleoid. Functionally, involved in control of chromosome replication initiation. Inhibits the cooperative binding of DnaA to the oriC region, thus negatively regulating initiation of chromosome replication. Inhibits the ability of DnaA-ATP to form a helix on DNA; does not disassemble preformed DnaA-DNA helices. Decreases the residence time of DnaA on the chromosome at its binding sites (oriC, replication forks and promoter-binding sites). Tethers DnaA to the replication machinery via the DNA polymerase beta sliding clamp subunit (dnaN). Associates with oriC and other DnaA targets on the chromosome in a DnaA-dependent manner. In Lacticaseibacillus casei (strain BL23) (Lactobacillus casei), this protein is Replication initiation control protein YabA.